A 623-amino-acid polypeptide reads, in one-letter code: Calnexin (623 aa).

Residues 1-21 form the signal peptide; that stretch reads MLNRKWSFVFLTFLLVISVNA. Asp108 contributes to the Ca(2+) binding site. A disulfide bridge links Cys151 with Cys185. An alpha-D-glucoside is bound by residues Tyr155, Lys157, Tyr176, and Asp183. Asn202 carries N-linked (GlcNAc...) asparagine glycosylation. The segment at 260 to 337 is disordered; sequence SLTPPKEIFD…QKPQDWDEDM (78 aa). A compositionally biased stretch (basic and acidic residues) spans 266–276; that stretch reads EIFDETDLKPE. Residues 267-400 form a p domain (Extended arm) region; sequence IFDETDLKPE…RLIDNPNYFE (134 aa). Tandem repeats lie at residues 269–281, 286–298, 305–317, 324–336, and 339–349. 4 X approximate repeats stretches follow at residues 269–336 and 339–396; these read DETD…WDED and GSWE…IDNP. Composition is skewed to acidic residues over residues 277-287 and 314-323; these read DWDEREQIEDE and WNEEENELIP. A disulfide bridge links Cys351 with Cys357. A run of 3 repeats spans residues 358 to 368, 372 to 382, and 386 to 396. Glu416 lines the an alpha-D-glucoside pocket. Residue Asp427 participates in Ca(2+) binding. Residues 480-500 form a helical membrane-spanning segment; it reads LWAVYILCILLPLIAIGVFCF. The interval 536-623 is disordered; that stretch reads IAEDEEDNQP…AKRRTARRGD (88 aa). The span at 556–565 shows a compositional bias: acidic residues; that stretch reads IDEDEQDEVE. The span at 566–581 shows a compositional bias: low complexity; the sequence is QQPSSSKTASSESSSA. Over residues 614-623 the composition is skewed to basic residues; the sequence is AKRRTARRGD.

It belongs to the calreticulin family. In terms of processing, glycosylation is important for its biological activity.

It localises to the endoplasmic reticulum membrane. The protein localises to the cytoplasm. The protein resides in the perinuclear region. Its subcellular location is the cytoplasmic vesicle. In terms of biological role, calcium-binding protein that interacts with newly synthesized monoglucosylated glycoproteins in the endoplasmic reticulum. It may act in assisting protein assembly and/or in the retention within the ER of unassembled protein subunits. It seems to play a major role in the quality control apparatus of the ER by the retention of incorrectly folded proteins. Required for embryogenesis and larval development under heat and ER stress conditions. May be important for germ cell development. Involved in neuronal necrotic cell death. In Caenorhabditis briggsae, this protein is Calnexin.